The chain runs to 206 residues: Ribosomal RNA small subunit methyltransferase G (206 aa).

S-adenosyl-L-methionine-binding positions include Gly74, Leu79, Val125 to Glu126, and Arg140.

It belongs to the methyltransferase superfamily. RNA methyltransferase RsmG family.

It is found in the cytoplasm. The catalysed reaction is guanosine(527) in 16S rRNA + S-adenosyl-L-methionine = N(7)-methylguanosine(527) in 16S rRNA + S-adenosyl-L-homocysteine. In terms of biological role, specifically methylates the N7 position of guanine in position 527 of 16S rRNA. The sequence is that of Ribosomal RNA small subunit methyltransferase G from Shewanella woodyi (strain ATCC 51908 / MS32).